A 189-amino-acid chain; its full sequence is MKILANAIREGNILEYQNNLWIVSKKPDHTKPGKGGAYIQLEMKNLKTGTKIYERFSSSDYLEKATLEQRNYQYLYQENNHLVLMDLESFEQILVQKSIIASNKLPFLLENTVVTVETYKDEPIRLVLPHTVVVEILETSPNIKGATVTASYKPAILSNGAKIMVPPYLSAGEKIVVKLEDISFVERAK.

It belongs to the elongation factor P family.

It localises to the cytoplasm. It participates in protein biosynthesis; polypeptide chain elongation. In terms of biological role, involved in peptide bond synthesis. Stimulates efficient translation and peptide-bond synthesis on native or reconstituted 70S ribosomes in vitro. Probably functions indirectly by altering the affinity of the ribosome for aminoacyl-tRNA, thus increasing their reactivity as acceptors for peptidyl transferase. In Orientia tsutsugamushi (strain Boryong) (Rickettsia tsutsugamushi), this protein is Elongation factor P.